The primary structure comprises 674 residues: Probable copper-transporting P-type ATPase B (674 aa).

The disordered stretch occupies residues 1–22 (MNHSNQMHHDNHESHNHHSGHA). Residues 7-16 (MHHDNHESHN) show a composition bias toward basic and acidic residues. 6 helical membrane-spanning segments follow: residues 32 to 52 (FFVS…MGVN), 57 to 77 (FTFP…FFYG), 95 to 115 (GMMT…LYAF), 127 to 147 (TMDF…GHWI), 284 to 304 (GYLF…WMLI), and 315 to 335 (LVTV…PLVT). The active-site 4-aspartylphosphate intermediate is the Asp-367. Asp-565 and Asp-569 together coordinate Mg(2+). Helical transmembrane passes span 623–645 (LWWG…AFIG) and 649–671 (SPAI…AFTL).

It belongs to the cation transport ATPase (P-type) (TC 3.A.3) family. Type IB subfamily.

It localises to the cell membrane. It carries out the reaction Cu(+)(in) + ATP + H2O = Cu(+)(out) + ADP + phosphate + H(+). In terms of biological role, involved in copper transport. The protein is Probable copper-transporting P-type ATPase B (copB) of Staphylococcus epidermidis (strain ATCC 35984 / DSM 28319 / BCRC 17069 / CCUG 31568 / BM 3577 / RP62A).